The following is a 239-amino-acid chain: Putative ABC transporter ATP-binding protein AlbC (239 aa).

Residues Leu-4–His-238 enclose the ABC transporter domain. Residue Gly-37–Thr-44 participates in ATP binding.

This sequence belongs to the ABC transporter superfamily.

In terms of biological role, involved in the production of the bacteriocin subtilosin. Required for immunity to subtilosin. This Bacillus subtilis (strain 168) protein is Putative ABC transporter ATP-binding protein AlbC (albC).